The chain runs to 332 residues: Aquaporin-7-2 (332 aa).

Over residues 1-40 (MSGQHQITEQPSGNPLSRTSTLIQEKPLTPTSSHAGTQKQ) the composition is skewed to polar residues. The segment at 1–46 (MSGQHQITEQPSGNPLSRTSTLIQEKPLTPTSSHAGTQKQPEAPRQ) is disordered. Topologically, residues 1-66 (MSGQHQITEQ…RHAIRKPMAE (66 aa)) are cytoplasmic. The chain crosses the membrane as a helical span at residues 67–87 (FFGVALLIIFGAGSACQVVLS). The Extracellular segment spans residues 88–100 (TNPDVASSARGSF). The chain crosses the membrane as a helical span at residues 101-121 (LSINFGWAIGIAMGVWVSGGI). Residues 122–144 (SGGHINPAITIAMATYRGFPWCK) are Cytoplasmic-facing. The NPA 1 motif lies at 127–129 (NPA). A helical transmembrane segment spans residues 145-165 (VPSYILAQVLGGVVGAALVYA). The Extracellular segment spans residues 166-199 (NYIHAIDVFEGGHHIRTEATASLFATYALPYMTQ). Residues 200-220 (ASCFFSEFLATAVLSMMVFAL) traverse the membrane as a helical segment. Topologically, residues 221 to 230 (TDKRNHSPTN) are cytoplasmic. The chain crosses the membrane as a helical span at residues 231–251 (GLLPFALFILFVGLGASLGME). Residues 252–283 (TAYALNPARDFGPRLFLAMAGYGKALFNYRSQ) lie on the Extracellular side of the membrane. Positions 257-259 (NPA) match the NPA 2 motif. A helical membrane pass occupies residues 284-304 (YWLWAPIIAPVLGAQAGGLLY). The Cytoplasmic portion of the chain corresponds to 305-332 (DTFLNDGDNSPIKWRCASSQEQQLAEVV).

It belongs to the MIP/aquaporin (TC 1.A.8) family.

It localises to the membrane. The enzyme catalyses H2O(in) = H2O(out). In terms of biological role, water channel required to facilitate the transport of water across membranes. Does not mediate the transport carbon dioxide across the membrane. This is Aquaporin-7-2 from Laccaria bicolor (Bicoloured deceiver).